Here is a 2898-residue protein sequence, read N- to C-terminus: Pericentrin (2898 aa).

Positions 1 to 117 (MEDEQEQRRR…QPPPPQTAHS (117 aa)) are disordered. Basic residues predominate over residues 34-44 (SKKKTAKRKGS). Residue serine 44 is modified to Phosphoserine. 2 coiled-coil regions span residues 127-343 (LNNM…IRLL) and 382-434 (AQQQ…DSLE). The disordered stretch occupies residues 429-460 (REDSLESTEISSSCVLPEETSGREGKEPPDPL). Positions 448 to 457 (TSGREGKEPP) are enriched in basic and acidic residues. 4 coiled-coil regions span residues 468–527 (KVQE…LREK), 611–696 (CALQ…LETH), 727–787 (VADV…SLRM), and 872–939 (SQDQ…LRRL). A Phosphoserine modification is found at serine 1022. 3 coiled-coil regions span residues 1069–1383 (EREF…QENM), 1429–1482 (NEVV…SLMG), and 1529–1593 (QLLA…AKEA). Serine 1437 is subject to Phosphoserine. Disordered regions lie at residues 1745-1786 (VASR…DDVL), 1815-1880 (TQEK…PLTP), and 1958-1979 (TSPSHELARRSDGSRKSDGPDI). Composition is skewed to polar residues over residues 1747 to 1766 (SRDTNSETCKLQQPNLSENG) and 1817 to 1834 (EKLTSQGGPFSSQASGHS). Positions 1801 to 1822 (NQDLLVQVEMPDFPTQEKLTSQ) are interaction with CDK5RAP2. Serine 1828, serine 1859, serine 1860, and serine 1959 each carry phosphoserine. A compositionally biased stretch (basic and acidic residues) spans 1963–1976 (ELARRSDGSRKSDG). Serine 1987 is modified (phosphoserine). Residues 2046–2055 (SESQDPSSAL) show a composition bias toward polar residues. Positions 2046 to 2088 (SESQDPSSALNKGEPRDPLDGFPRDSQALSEVTTDKGEKESLE) are disordered. Basic and acidic residues-rich tracts occupy residues 2058 to 2068 (GEPRDPLDGFP) and 2078 to 2088 (TTDKGEKESLE). A Phosphoserine modification is found at serine 2128. Coiled-coil stretches lie at residues 2211-2403 (KVEQ…EALQ) and 2429-2590 (HALL…ELSM). Disordered stretches follow at residues 2509 to 2532 (VSGGNGPCRGSPGRGSLERDQFQE) and 2653 to 2684 (NRQSKSSLKQDGTDLQSSLRHSDPEWHSQTTS). The interval 2545 to 2810 (LCAAGLLTSF…SQRQRSPSGP (266 aa)) is interaction with NEK2. Polar residues predominate over residues 2653–2671 (NRQSKSSLKQDGTDLQSSL). The segment at 2758 to 2771 (KFRTAVRVVIAVLR) is calmodulin-binding. The interval 2787–2898 (ALVHPKSTRH…QKSCHQKIKQ (112 aa)) is disordered. Positions 2792-2802 (KSTRHGHRTSQ) are enriched in basic residues. Residues 2845 to 2860 (TSTPSSRLERSLTASQ) are compositionally biased toward polar residues. Residues 2861 to 2874 (DPEHSLTEYIHHLE) are compositionally biased toward basic and acidic residues. A Phosphoserine modification is found at serine 2865.

As to quaternary structure, interacts with DISC1 and PCM1. Binds calmodulin. Interacts with CEP131. Interacts with CDK5RAP2; the interaction is leading to centrosomal localization of PCNT and CDK5RAP2. Interacts with CHD3. Interacts with CHD4; the interaction regulates centrosome integrity. Interacts with NEK2. Interacts with CCDC13. Interacts with CEP68. Interacts with ATF5; the ATF5:PCNT:polyglutamylated tubulin (PGT) tripartite unites the mother centriole and the pericentriolar material (PCM) in the centrosome. In terms of processing, cleaved during mitotis which leads to removal of CDK5RAP2 from the centrosome and promotes centriole disengagement and subsequent centriole separation. The C-terminal fragment is rapidly degraded following cleavage. Post-translationally, ubiquitinated by TRIM43; leading to proteasomal degradation. As to expression, expressed in heart and lung (at protein level). Expressed in kidney, thymus, liver, brain, muscle, testis, spleen, lung and heart.

It localises to the cytoplasm. Its subcellular location is the cytoskeleton. The protein resides in the microtubule organizing center. It is found in the centrosome. In terms of biological role, integral component of the filamentous matrix of the centrosome involved in the initial establishment of organized microtubule arrays in both mitosis and meiosis. Plays a role, together with DISC1, in the microtubule network formation. Is an integral component of the pericentriolar material (PCM). May play an important role in preventing premature centrosome splitting during interphase by inhibiting NEK2 kinase activity at the centrosome. The chain is Pericentrin (Pcnt) from Mus musculus (Mouse).